The following is a 137-amino-acid chain: MPKHHQKAQSPGGSQRQLRVGEIVRHAVAELLSQGGVHDPVLEGHLITVPEVRMSPDLKLATVYVMPLGGRDTDVVLKALAANKPFIRTAVARRVNLKFAPDLRFRIDERFDEAERIEKLLRTPGVQKDLQQDSDET.

The protein belongs to the RbfA family. As to quaternary structure, monomer. Binds 30S ribosomal subunits, but not 50S ribosomal subunits or 70S ribosomes.

The protein resides in the cytoplasm. In terms of biological role, one of several proteins that assist in the late maturation steps of the functional core of the 30S ribosomal subunit. Associates with free 30S ribosomal subunits (but not with 30S subunits that are part of 70S ribosomes or polysomes). Required for efficient processing of 16S rRNA. May interact with the 5'-terminal helix region of 16S rRNA. The polypeptide is Ribosome-binding factor A (Rhodopseudomonas palustris (strain BisB18)).